Reading from the N-terminus, the 216-residue chain is FMN-dependent NADH:quinone oxidoreductase 3 (216 aa).

Residues Ser-10 and 16-18 (SAS) each bind FMN.

This sequence belongs to the azoreductase type 1 family. Homodimer. FMN serves as cofactor.

It catalyses the reaction 2 a quinone + NADH + H(+) = 2 a 1,4-benzosemiquinone + NAD(+). The catalysed reaction is N,N-dimethyl-1,4-phenylenediamine + anthranilate + 2 NAD(+) = 2-(4-dimethylaminophenyl)diazenylbenzoate + 2 NADH + 2 H(+). Functionally, quinone reductase that provides resistance to thiol-specific stress caused by electrophilic quinones. In terms of biological role, also exhibits azoreductase activity. Catalyzes the reductive cleavage of the azo bond in aromatic azo compounds to the corresponding amines. This chain is FMN-dependent NADH:quinone oxidoreductase 3, found in Pseudomonas fluorescens (strain ATCC BAA-477 / NRRL B-23932 / Pf-5).